Reading from the N-terminus, the 225-residue chain is Uracil-DNA glycosylase (225 aa).

The Proton acceptor role is filled by D64.

Belongs to the uracil-DNA glycosylase (UDG) superfamily. UNG family.

The protein resides in the cytoplasm. The catalysed reaction is Hydrolyzes single-stranded DNA or mismatched double-stranded DNA and polynucleotides, releasing free uracil.. In terms of biological role, excises uracil residues from the DNA which can arise as a result of misincorporation of dUMP residues by DNA polymerase or due to deamination of cytosine. This is Uracil-DNA glycosylase from Agathobacter rectalis (strain ATCC 33656 / DSM 3377 / JCM 17463 / KCTC 5835 / VPI 0990) (Eubacterium rectale).